Consider the following 231-residue polypeptide: Biosynthetic peptidoglycan transglycosylase (231 aa).

The chain crosses the membrane as a helical span at residues leucine 7–phenylalanine 27.

It belongs to the glycosyltransferase 51 family.

The protein localises to the cell inner membrane. The catalysed reaction is [GlcNAc-(1-&gt;4)-Mur2Ac(oyl-L-Ala-gamma-D-Glu-L-Lys-D-Ala-D-Ala)](n)-di-trans,octa-cis-undecaprenyl diphosphate + beta-D-GlcNAc-(1-&gt;4)-Mur2Ac(oyl-L-Ala-gamma-D-Glu-L-Lys-D-Ala-D-Ala)-di-trans,octa-cis-undecaprenyl diphosphate = [GlcNAc-(1-&gt;4)-Mur2Ac(oyl-L-Ala-gamma-D-Glu-L-Lys-D-Ala-D-Ala)](n+1)-di-trans,octa-cis-undecaprenyl diphosphate + di-trans,octa-cis-undecaprenyl diphosphate + H(+). It functions in the pathway cell wall biogenesis; peptidoglycan biosynthesis. Peptidoglycan polymerase that catalyzes glycan chain elongation from lipid-linked precursors. The protein is Biosynthetic peptidoglycan transglycosylase of Janthinobacterium sp. (strain Marseille) (Minibacterium massiliensis).